The sequence spans 293 residues: Acetyl-coenzyme A carboxylase carboxyl transferase subunit beta (293 aa).

One can recognise a CoA carboxyltransferase N-terminal domain in the interval 29–293 (LWVKCSECSQ…GVKELAEANT (265 aa)). 4 residues coordinate Zn(2+): cysteine 33, cysteine 36, cysteine 52, and cysteine 55. A C4-type zinc finger spans residues 33–55 (CSECSQVAYRKDLISNFNVCNNC).

It belongs to the AccD/PCCB family. Acetyl-CoA carboxylase is a heterohexamer composed of biotin carboxyl carrier protein (AccB), biotin carboxylase (AccC) and two subunits each of ACCase subunit alpha (AccA) and ACCase subunit beta (AccD). Requires Zn(2+) as cofactor.

Its subcellular location is the cytoplasm. It catalyses the reaction N(6)-carboxybiotinyl-L-lysyl-[protein] + acetyl-CoA = N(6)-biotinyl-L-lysyl-[protein] + malonyl-CoA. It functions in the pathway lipid metabolism; malonyl-CoA biosynthesis; malonyl-CoA from acetyl-CoA: step 1/1. Its function is as follows. Component of the acetyl coenzyme A carboxylase (ACC) complex. Biotin carboxylase (BC) catalyzes the carboxylation of biotin on its carrier protein (BCCP) and then the CO(2) group is transferred by the transcarboxylase to acetyl-CoA to form malonyl-CoA. This chain is Acetyl-coenzyme A carboxylase carboxyl transferase subunit beta, found in Prochlorococcus marinus (strain AS9601).